A 307-amino-acid polypeptide reads, in one-letter code: MAEISDLDRQIEQLRRCELIKESEVKALCAKAREILVEESNVQRVDSPVTVCGDIHGQFYDLKELFRVGGDVPETNYLFMGDFVDRGFYSVETFLLLLALKVRYPDRITLIRGNHESRQITQVYGFYDECLRKYGSVTVWRYCTEIFDYLSLSAIIDGKIFCVHGGLSPSIQTLDQIRTIDRKQEVPHDGPMCDLLWSDPEDTTGWGVSPRGAGYLFGSDVVAQFNAANDIDMICRAHQLVMEGYKWHFNETVLTVWSAPNYCYRCGNVAAILELDEHLQKDFIIFEAAPQETRGIPSKKPVADYFL.

Ala-2 is modified (N-acetylalanine). Asp-54, His-56, Asp-82, and Asn-114 together coordinate Mn(2+). Catalysis depends on His-115, which acts as the Proton donor. Mn(2+)-binding residues include His-164 and His-238. The residue at position 307 (Leu-307) is a Leucine methyl ester.

It belongs to the PPP phosphatase family. PP-4 (PP-X) subfamily. As to quaternary structure, serine/threonine-protein phosphatase 4 (PP4) occurs in different assemblies of the catalytic and one or more regulatory subunits. Component of the PP4 complexes PPP4C-PPP4R1, PPP4C-PPP4R2, PPP4C-PPP4R2-PPP4R3A, PPP4C-PPP4R2-PPP4R3B and PPP4C-PPP4R4. The PPP4C-PPP4R2 complex appears to be a tetramer composed of 2 molecules of PPP4C and 2 molecules of PPP4R2. Interacts with REL, NFKB1/p50 and RELA. Interacts with SMN1 and GEMIN4. Interacts with IRS4 (phosphorylated). Interacts with SMEK1/PPP4R3A; the interaction requires PP4R2. Interacts with HDAC3. The cofactor is Mn(2+). Methylation at the C-terminal Leu-307 is critical for interactions with regulatory subunits and functions in DNA repair.

It localises to the cytoplasm. The protein resides in the nucleus. Its subcellular location is the cytoskeleton. It is found in the microtubule organizing center. The protein localises to the centrosome. It carries out the reaction O-phospho-L-seryl-[protein] + H2O = L-seryl-[protein] + phosphate. It catalyses the reaction O-phospho-L-threonyl-[protein] + H2O = L-threonyl-[protein] + phosphate. Functionally, protein phosphatase that is involved in many processes such as microtubule organization at centrosomes, maturation of spliceosomal snRNPs, apoptosis, DNA repair, tumor necrosis factor (TNF)-alpha signaling, activation of c-Jun N-terminal kinase MAPK8, regulation of histone acetylation, DNA damage checkpoint signaling, NF-kappa-B activation and cell migration. The PPP4C-PPP4R1 PP4 complex may play a role in dephosphorylation and regulation of HDAC3. The PPP4C-PPP4R2-PPP4R3A PP4 complex specifically dephosphorylates H2AX phosphorylated on Ser-140 (gamma-H2AX) generated during DNA replication and required for DNA double strand break repair. Dephosphorylates NDEL1 at CDK1 phosphorylation sites and negatively regulates CDK1 activity in interphase. In response to DNA damage, catalyzes RPA2 dephosphorylation, an essential step for DNA repair since it allows the efficient RPA2-mediated recruitment of RAD51 to chromatin. This is Serine/threonine-protein phosphatase 4 catalytic subunit (PPP4C) from Homo sapiens (Human).